The sequence spans 490 residues: Chromosomal replication initiator protein DnaA (490 aa).

The interval 1–91 (MTMKGGVASQ…GELWAAHDAT (91 aa)) is domain I, interacts with DnaA modulators. Residues 91 to 147 (TGRRIDLKSRLEFEAAAGAYVEATPKAVAAEPIEIVLPVSTDAPTVVAPSAKSPRTQ) form a domain II region. A domain III, AAA+ region region spans residues 148–370 (GLQERFTFET…GALNTLSARA (223 aa)). 4 residues coordinate ATP: Gly-192, Gly-194, Lys-195, and Thr-196. A domain IV, binds dsDNA region spans residues 371-490 (GEGLSRMTLD…LETLTRKLRG (120 aa)).

It belongs to the DnaA family. In terms of assembly, oligomerizes as a right-handed, spiral filament on DNA at oriC.

The protein localises to the cytoplasm. Functionally, plays an essential role in the initiation and regulation of chromosomal replication. ATP-DnaA binds to the origin of replication (oriC) to initiate formation of the DNA replication initiation complex once per cell cycle. Binds the DnaA box (a 9 base pair repeat at the origin) and separates the double-stranded (ds)DNA. Forms a right-handed helical filament on oriC DNA; dsDNA binds to the exterior of the filament while single-stranded (ss)DNA is stabiized in the filament's interior. The ATP-DnaA-oriC complex binds and stabilizes one strand of the AT-rich DNA unwinding element (DUE), permitting loading of DNA polymerase. After initiation quickly degrades to an ADP-DnaA complex that is not apt for DNA replication. Binds acidic phospholipids. The protein is Chromosomal replication initiator protein DnaA of Caulobacter vibrioides (strain ATCC 19089 / CIP 103742 / CB 15) (Caulobacter crescentus).